The chain runs to 147 residues: Large ribosomal subunit protein uL13 (147 aa).

The protein belongs to the universal ribosomal protein uL13 family. As to quaternary structure, part of the 50S ribosomal subunit.

This protein is one of the early assembly proteins of the 50S ribosomal subunit, although it is not seen to bind rRNA by itself. It is important during the early stages of 50S assembly. The polypeptide is Large ribosomal subunit protein uL13 (Beutenbergia cavernae (strain ATCC BAA-8 / DSM 12333 / CCUG 43141 / JCM 11478 / NBRC 16432 / NCIMB 13614 / HKI 0122)).